Consider the following 461-residue polypeptide: uncharacterized protein (461 aa).

Disordered stretches follow at residues 254–273 (NNNN…NNNN) and 368–414 (QPSQ…NNNS). Low complexity predominate over residues 381 to 413 (NNNNNNNNNNNNNNNNNNNNNNNNNNNNNNNNN).

This is an uncharacterized protein from Dictyostelium discoideum (Social amoeba).